The following is a 346-amino-acid chain: UDP-N-acetylenolpyruvoylglucosamine reductase (346 aa).

Positions Phe23–Val194 constitute an FAD-binding PCMH-type domain. Arg170 is a catalytic residue. Residue Ser246 is the Proton donor of the active site. Residue Glu342 is part of the active site.

It belongs to the MurB family. FAD serves as cofactor.

Its subcellular location is the cytoplasm. It catalyses the reaction UDP-N-acetyl-alpha-D-muramate + NADP(+) = UDP-N-acetyl-3-O-(1-carboxyvinyl)-alpha-D-glucosamine + NADPH + H(+). It functions in the pathway cell wall biogenesis; peptidoglycan biosynthesis. Cell wall formation. The polypeptide is UDP-N-acetylenolpyruvoylglucosamine reductase (Paraburkholderia phymatum (strain DSM 17167 / CIP 108236 / LMG 21445 / STM815) (Burkholderia phymatum)).